The primary structure comprises 640 residues: RecBCD enzyme subunit RecD (640 aa).

Position 194–201 (194–201 (GGPGTGKT)) interacts with ATP.

The protein belongs to the RecD family. In terms of assembly, heterotrimer of RecB, RecC and RecD. All subunits contribute to DNA-binding.

The catalysed reaction is Couples ATP hydrolysis with the unwinding of duplex DNA at the replication fork by translocating in the 5'-3' direction. This creates two antiparallel DNA single strands (ssDNA). The leading ssDNA polymer is the template for DNA polymerase III holoenzyme which synthesizes a continuous strand.. The enzyme catalyses ATP + H2O = ADP + phosphate + H(+). A helicase/nuclease that prepares dsDNA breaks (DSB) for recombinational DNA repair. Binds to DSBs and unwinds DNA via a highly rapid and processive ATP-dependent bidirectional helicase activity. Unwinds dsDNA until it encounters a Chi (crossover hotspot instigator) sequence from the 3' direction. Cuts ssDNA a few nucleotides 3' to the Chi site. The properties and activities of the enzyme are changed at Chi. The Chi-altered holoenzyme produces a long 3'-ssDNA overhang and facilitates RecA-binding to the ssDNA for homologous DNA recombination and repair. Holoenzyme degrades any linearized DNA that is unable to undergo homologous recombination. In the holoenzyme this subunit has ssDNA-dependent ATPase and 5'-3' helicase activity. When added to pre-assembled RecBC greatly stimulates nuclease activity and augments holoenzyme processivity. Negatively regulates the RecA-loading ability of RecBCD. This chain is RecBCD enzyme subunit RecD, found in Haemophilus influenzae (strain ATCC 51907 / DSM 11121 / KW20 / Rd).